The sequence spans 457 residues: Siroheme synthase (457 aa).

Residues 4 to 202 (LPIFCQLRDR…ANADEKAVNA (199 aa)) are precorrin-2 dehydrogenase /sirohydrochlorin ferrochelatase. NAD(+) is bound by residues 22–23 (DV) and 43–44 (LT). Phosphoserine is present on Ser128. The uroporphyrinogen-III C-methyltransferase stretch occupies residues 216–448 (GEVVLVGAGP…IIVGRVVALR (233 aa)). Pro225 serves as a coordination point for S-adenosyl-L-methionine. Asp248 (proton acceptor) is an active-site residue. The active-site Proton donor is Lys270. Residues 301-303 (GGD), Ile306, 331-332 (TA), Met382, Gly411, and Ala437 each bind S-adenosyl-L-methionine.

The protein in the N-terminal section; belongs to the precorrin-2 dehydrogenase / sirohydrochlorin ferrochelatase family. This sequence in the C-terminal section; belongs to the precorrin methyltransferase family. Homodimer.

The enzyme catalyses uroporphyrinogen III + 2 S-adenosyl-L-methionine = precorrin-2 + 2 S-adenosyl-L-homocysteine + H(+). It carries out the reaction precorrin-2 + NAD(+) = sirohydrochlorin + NADH + 2 H(+). The catalysed reaction is siroheme + 2 H(+) = sirohydrochlorin + Fe(2+). The protein operates within cofactor biosynthesis; adenosylcobalamin biosynthesis; precorrin-2 from uroporphyrinogen III: step 1/1. It participates in cofactor biosynthesis; adenosylcobalamin biosynthesis; sirohydrochlorin from precorrin-2: step 1/1. Its pathway is porphyrin-containing compound metabolism; siroheme biosynthesis; precorrin-2 from uroporphyrinogen III: step 1/1. It functions in the pathway porphyrin-containing compound metabolism; siroheme biosynthesis; siroheme from sirohydrochlorin: step 1/1. The protein operates within porphyrin-containing compound metabolism; siroheme biosynthesis; sirohydrochlorin from precorrin-2: step 1/1. Functionally, multifunctional enzyme that catalyzes the SAM-dependent methylations of uroporphyrinogen III at position C-2 and C-7 to form precorrin-2 via precorrin-1. Then it catalyzes the NAD-dependent ring dehydrogenation of precorrin-2 to yield sirohydrochlorin. Finally, it catalyzes the ferrochelation of sirohydrochlorin to yield siroheme. In Salmonella typhimurium (strain LT2 / SGSC1412 / ATCC 700720), this protein is Siroheme synthase.